A 279-amino-acid chain; its full sequence is DegV domain-containing protein M6_Spy1246 (279 aa).

A DegV domain is found at 4–278 (IKIVTDSSIT…EGAFAVMVRY (275 aa)). 2 residues coordinate hexadecanoate: T62 and S95.

In terms of biological role, may bind long-chain fatty acids, such as palmitate, and may play a role in lipid transport or fatty acid metabolism. This chain is DegV domain-containing protein M6_Spy1246, found in Streptococcus pyogenes serotype M6 (strain ATCC BAA-946 / MGAS10394).